A 182-amino-acid chain; its full sequence is Large ribosomal subunit protein uL16 (182 aa).

Belongs to the universal ribosomal protein uL16 family.

The chain is Large ribosomal subunit protein uL16 from Thermococcus gammatolerans (strain DSM 15229 / JCM 11827 / EJ3).